Here is a 718-residue protein sequence, read N- to C-terminus: Catalase-peroxidase (718 aa).

The segment at residues 92–220 (WHAAGTYRTA…LASVMMGLIY (129 aa)) is a cross-link (tryptophyl-tyrosyl-methioninium (Trp-Tyr) (with M-246)). Catalysis depends on His-93, which acts as the Proton acceptor. Positions 220–246 (YVNPEGVDGHPDPLKTANDVRVTFERM) form a cross-link, tryptophyl-tyrosyl-methioninium (Tyr-Met) (with W-92). Heme b is bound at residue His-261.

The protein belongs to the peroxidase family. Peroxidase/catalase subfamily. Homodimer or homotetramer. Heme b serves as cofactor. Post-translationally, formation of the three residue Trp-Tyr-Met cross-link is important for the catalase, but not the peroxidase activity of the enzyme.

The catalysed reaction is H2O2 + AH2 = A + 2 H2O. The enzyme catalyses 2 H2O2 = O2 + 2 H2O. Its function is as follows. Bifunctional enzyme with both catalase and broad-spectrum peroxidase activity. This chain is Catalase-peroxidase, found in Shewanella halifaxensis (strain HAW-EB4).